The chain runs to 150 residues: Holo-[acyl-carrier-protein] synthase (150 aa).

Residues D8 and E57 each contribute to the Mg(2+) site.

This sequence belongs to the P-Pant transferase superfamily. AcpS family. It depends on Mg(2+) as a cofactor.

The protein resides in the cytoplasm. The catalysed reaction is apo-[ACP] + CoA = holo-[ACP] + adenosine 3',5'-bisphosphate + H(+). In terms of biological role, transfers the 4'-phosphopantetheine moiety from coenzyme A to a Ser of acyl-carrier-protein. The sequence is that of Holo-[acyl-carrier-protein] synthase from Jannaschia sp. (strain CCS1).